The chain runs to 1759 residues: Putative ATP-dependent RNA helicase TDRD12 (1759 aa).

The Tudor 1 domain occupies 74–153; it reads FQNLEQVWFS…KLSNTETRAV (80 aa). Low complexity predominate over residues 480 to 495; that stretch reads NSAASESSTKSSMDSS. The disordered stretch occupies residues 480–506; it reads NSAASESSTKSSMDSSRISDEDDLSSD. Residues 611–789 form the Helicase ATP-binding domain; the sequence is WGTILRGLST…DFLEPIVLKA (179 aa). Position 624-631 (624-631) interacts with ATP; it reads SPPRSGKT. One can recognise a Helicase C-terminal domain in the interval 823–980; it reads NVLQFIDSVQ…NVPKILDEVS (158 aa). The 60-residue stretch at 1335–1394 folds into the Tudor 2 domain; the sequence is GSNVGDIVLAKFPDDSMYERARIDHIYSEDKVKCFFVDQGDWRDVSTNDLATITENFITQ. The region spanning 1618 to 1704 is the CS domain; sequence LSKPKICWSQ…LMCRNWLALT (87 aa).

In terms of assembly, interacts (via Tudor domain 2) with Siwi. Component of the PET complex, at least composed of EXD1, SIWI, TDRD12 and piRNAs. In terms of tissue distribution, expressed in the yolk cells. Not detected in yolk granules.

It localises to the chromosome. It is found in the cytoplasm. The protein resides in the cytosol. The protein localises to the nucleus membrane. The enzyme catalyses ATP + H2O = ADP + phosphate + H(+). Probable ATP-binding RNA helicase required during spermatogenesis to repress transposable elements and preventing their mobilization, which is essential for the germline integrity. Acts via the piRNA metabolic process, which mediates the repression of transposable elements during meiosis by forming complexes composed of piRNAs and Piwi proteins and governs the methylation and subsequent repression of transposons. This Bombyx mori (Silk moth) protein is Putative ATP-dependent RNA helicase TDRD12 (TDRD12).